We begin with the raw amino-acid sequence, 885 residues long: Rho GTPase-activating protein gacFF (885 aa).

Residues 168–182 show a composition bias toward low complexity; sequence TTTNNSNNSNSNNNN. A disordered region spans residues 168–187; that stretch reads TTTNNSNNSNSNNNNKQYNS. Residues 222–249 adopt a coiled-coil conformation; sequence LINKIQNDSEQLKLVLSQVEQQIEFLKS. Residues 348 to 394 enclose the F-box domain; it reads SDIFSLLPTHLTLYVFSYLEPKELLILAQVSSQWQKLAGDNLLWVRF. The region spanning 464–571 is the PH domain; that stretch reads SSSKEGWLYK…WMILLNSIIK (108 aa). Low complexity-rich tracts occupy residues 594-622 and 629-648; these read NNVY…NNNN and LPPL…SSTG. The interval 594 to 680 is disordered; sequence NNVYINNNNN…GGGSGGNNNF (87 aa). In terms of domain architecture, Rho-GAP spans 701–885; sequence VALSKILENQ…KYYDEIFIKK (185 aa).

It localises to the cytoplasm. Functionally, rho GTPase-activating protein involved in the signal transduction pathway. This chain is Rho GTPase-activating protein gacFF (gacFF), found in Dictyostelium discoideum (Social amoeba).